A 143-amino-acid chain; its full sequence is Papain inhibitor (143 aa).

The N-terminal stretch at 1–33 (MREFRRVRRVRFAACALVAAATGITLAAGPASA) is a signal peptide.

As to quaternary structure, monomer.

The protein localises to the secreted. Stress protein produced under hyperthermal stress conditions. Serves as a glutamine and lysine donor substrate for transglutaminase. Inhibits the cysteine proteases papain and bromelain as well as the bovine serine protease trypsin. Has hardly any or no effect on subtilisin, bovine chymotrypsin, proteinase K from T.album, transglutaminase-activating metalloproteinase (TAMEP) from S.mobaraensis, dispase from B.polymyxa, thermolysin from B.thermoproteolyticus or collagenase from C.histolyticum. This Streptomyces mobaraensis (Streptoverticillium mobaraense) protein is Papain inhibitor (pi).